A 154-amino-acid chain; its full sequence is uncharacterized protein (154 aa).

The N-terminal stretch at 1–21 is a signal peptide; sequence MSISSGSFAQPAAVVSSPGVT.

The protein belongs to the ivy family.

It localises to the periplasm. This is an uncharacterized protein from Yersinia pestis.